We begin with the raw amino-acid sequence, 485 residues long: E3 ubiquitin-protein ligase TRIM58 (485 aa).

The RING-type zinc-finger motif lies at 15–59 (CSVCLDFLQEPISVDCGHSFCLRCISEFCEKSDSAQGVYACPQCR). The B box-type zinc-finger motif lies at 90–131 (AGSRQCARHGEDLSHFCEEDQTMLCWVCDTSPEHRSHRTETL). The Zn(2+) site is built by cysteine 95, histidine 98, cysteine 117, and histidine 123. Residues 192 to 241 (LAQEEQLQLRRLEEEERATLQRLRDSRNRLAQQNKALKELAEELEERSQR) adopt a coiled-coil conformation. A B30.2/SPRY domain is found at 271 to 466 (DLKTVCRIPG…LPPMTEAAPG (196 aa)).

It belongs to the TRIM/RBCC family. Expressed in erythroblasts.

It catalyses the reaction S-ubiquitinyl-[E2 ubiquitin-conjugating enzyme]-L-cysteine + [acceptor protein]-L-lysine = [E2 ubiquitin-conjugating enzyme]-L-cysteine + N(6)-ubiquitinyl-[acceptor protein]-L-lysine.. Its pathway is protein modification; protein ubiquitination. E3 ubiquitin ligase induced during late erythropoiesis. Directly binds and ubiquitinates the intermediate chain of the microtubule motor dynein (DYNC1LI1/DYNC1LI2), stimulating the degradation of the dynein holoprotein complex. May participate in the erythroblast enucleation process through regulation of nuclear polarization. This is E3 ubiquitin-protein ligase TRIM58 (Trim58) from Mus musculus (Mouse).